The following is a 358-amino-acid chain: Aurora kinase (358 aa).

Positions 1 to 49 are disordered; it reads MENKATLARNIGEKRVSPRSKVNGTGKSWRISYSPQRMDGVSSGRNVSK. The span at 20 to 35 shows a compositional bias: polar residues; the sequence is SKVNGTGKSWRISYSP. One can recognise a Protein kinase domain in the interval 100 to 358; that stretch reads FEVGRKLGKG…PWILKNKPFW (259 aa). Residues 106-114 and lysine 129 contribute to the ATP site; that span reads LGKGKFGKV. The active-site Proton acceptor is the aspartate 223.

Belongs to the protein kinase superfamily. Ser/Thr protein kinase family. Aurora subfamily.

It is found in the nucleus. The protein localises to the cytoplasm. Its subcellular location is the cytoskeleton. It localises to the spindle. The protein resides in the chromosome. It is found in the centromere. The protein localises to the kinetochore. It carries out the reaction L-seryl-[protein] + ATP = O-phospho-L-seryl-[protein] + ADP + H(+). It catalyses the reaction L-threonyl-[protein] + ATP = O-phospho-L-threonyl-[protein] + ADP + H(+). Its function is as follows. Component of the chromosomal passenger complex (CPC), a complex that acts as a key regulator of chromosome segregation and cytokinesis. Has a role in error-correction of aberrent kinetochore-microtubule attachments to ensure that sister kinetochores become bioriented and connect to opposite poles by promoting spindle assembly checkpoint signaling. The chain is Aurora kinase (IPL1) from Candida glabrata (strain ATCC 2001 / BCRC 20586 / JCM 3761 / NBRC 0622 / NRRL Y-65 / CBS 138) (Yeast).